The sequence spans 508 residues: Photosystem II CP47 reaction center protein (508 aa).

The next 6 membrane-spanning stretches (helical) occupy residues 21-36, 101-115, 140-156, 203-218, 237-252, and 457-472; these read SVHI…WAGS, IVFS…IWHW, GIHL…FGAF, IAAG…FHLS, VLSS…AFVV, and SFAL…HGAR.

It belongs to the PsbB/PsbC family. PsbB subfamily. In terms of assembly, PSII is composed of 1 copy each of membrane proteins PsbA, PsbB, PsbC, PsbD, PsbE, PsbF, PsbH, PsbI, PsbJ, PsbK, PsbL, PsbM, PsbT, PsbX, PsbY, PsbZ, Psb30/Ycf12, at least 3 peripheral proteins of the oxygen-evolving complex and a large number of cofactors. It forms dimeric complexes. The cofactor is Binds multiple chlorophylls. PSII binds additional chlorophylls, carotenoids and specific lipids..

Its subcellular location is the plastid. The protein localises to the chloroplast thylakoid membrane. Functionally, one of the components of the core complex of photosystem II (PSII). It binds chlorophyll and helps catalyze the primary light-induced photochemical processes of PSII. PSII is a light-driven water:plastoquinone oxidoreductase, using light energy to abstract electrons from H(2)O, generating O(2) and a proton gradient subsequently used for ATP formation. This is Photosystem II CP47 reaction center protein from Carica papaya (Papaya).